The primary structure comprises 134 residues: Beta-synuclein (134 aa).

2 consecutive repeat copies span residues 20–30 (EKTKQGVTEAA) and 31–41 (EKTKEGVLYVG). The segment at 20-67 (EKTKQGVTEAAEKTKEGVLYVGSKTREGVVQGVASVAEKTKEQASHLG) is 4 X 11 AA tandem repeats of [EGS]-K-T-K-[EQ]-[GQ]-V-X(4). Residues 42-56 (SKTREGVVQGVASVA) form a 3; approximate repeat. Repeat unit 4 spans residues 57–67 (EKTKEQASHLG). Residues 89–134 (FPTDLKPEEVAQEAAEEPLIEPLMEPEGESYEDPPQEEYQEYEPEA) are disordered. Positions 98 to 134 (VAQEAAEEPLIEPLMEPEGESYEDPPQEEYQEYEPEA) are enriched in acidic residues. S118 carries the post-translational modification Phosphoserine; by BARK1, CK2 and GRK5.

The protein belongs to the synuclein family. Post-translationally, phosphorylated. Phosphorylation by G-protein coupled receptor kinases (GRK) is more efficient than phosphorylation by CK1, CK2 and CaM-kinase II. Expressed predominantly in brain; concentrated in presynaptic nerve terminals.

Its subcellular location is the cytoplasm. Functionally, non-amyloid component of senile plaques found in Alzheimer disease. Could act as a regulator of SNCA aggregation process. Protects neurons from staurosporine and 6-hydroxy dopamine (6OHDA)-stimulated caspase activation in a p53/TP53-dependent manner. Contributes to restore the SNCA anti-apoptotic function abolished by 6OHDA. Not found in the Lewy bodies associated with Parkinson disease. This chain is Beta-synuclein (SNCB), found in Homo sapiens (Human).